The sequence spans 201 residues: Recombination protein RecR (201 aa).

The segment at 58-73 adopts a C4-type zinc-finger fold; it reads CGRCGALTDVDPCGIC. Residues 81-178 form the Toprim domain; the sequence is ETLCLVSEWD…RVTRLAQGIP (98 aa).

The protein belongs to the RecR family.

May play a role in DNA repair. It seems to be involved in an RecBC-independent recombinational process of DNA repair. It may act with RecF and RecO. This is Recombination protein RecR from Nitratidesulfovibrio vulgaris (strain DSM 19637 / Miyazaki F) (Desulfovibrio vulgaris).